A 122-amino-acid chain; its full sequence is Large ribosomal subunit protein uL14 (122 aa).

Belongs to the universal ribosomal protein uL14 family. Part of the 50S ribosomal subunit. Forms a cluster with proteins L3 and L19. In the 70S ribosome, L14 and L19 interact and together make contacts with the 16S rRNA in bridges B5 and B8.

Its function is as follows. Binds to 23S rRNA. Forms part of two intersubunit bridges in the 70S ribosome. This chain is Large ribosomal subunit protein uL14, found in Brachyspira hyodysenteriae (strain ATCC 49526 / WA1).